A 200-amino-acid polypeptide reads, in one-letter code: Golgi to ER traffic protein 1 (200 aa).

Over 1–6 the chain is Lumenal; sequence MEPYTL. The chain crosses the membrane as a helical span at residues 7 to 26; it reads LLFIFVIQIVKQIISAVGKQ. The Cytoplasmic segment spans residues 27 to 113; the sequence is SIESISWVLY…KVNTFTGYLI (87 aa). Residues 75 to 107 adopt a coiled-coil conformation; sequence AKWTKLNRQHDKLVAEIEQLQKEVDLDKVKVNT. A helical transmembrane segment spans residues 114–134; it reads AILTSIPIWFFRVWYRSVVLF. The Lumenal portion of the chain corresponds to 135–158; that stretch reads YFPPGILPRALEWSIALPFTVTGG. The helical transmembrane segment at 159-175 threads the bilayer; the sequence is VSLTVWMMAAGAVASSL. Topologically, residues 176–200 are cytoplasmic; the sequence is TFLFMFPFEKAVPKPVLAKKSPQQL.

The protein belongs to the WRB/GET1 family. In terms of assembly, component of the Golgi to ER traffic (GET) complex, which is composed of GET1, GET2 and GET3. Within the complex, GET1 and GET2 form a heterotetramer which is stabilized by phosphatidylinositol binding and which binds to the GET3 homodimer.

It is found in the endoplasmic reticulum membrane. It localises to the golgi apparatus membrane. Functionally, required for the post-translational delivery of tail-anchored (TA) proteins to the endoplasmic reticulum. Together with GET2, acts as a membrane receptor for soluble GET3, which recognizes and selectively binds the transmembrane domain of TA proteins in the cytosol. The GET complex cooperates with the HDEL receptor ERD2 to mediate the ATP-dependent retrieval of resident ER proteins that contain a C-terminal H-D-E-L retention signal from the Golgi to the ER. The sequence is that of Golgi to ER traffic protein 1 from Meyerozyma guilliermondii (strain ATCC 6260 / CBS 566 / DSM 6381 / JCM 1539 / NBRC 10279 / NRRL Y-324) (Yeast).